The sequence spans 733 residues: MNLGSEQILPEDFYLAEEGALLEEMAEEDEEIDLYNEVTFGLDQESDEEPVKLEDDHTKPIQMPEAPKEEEPEALQPVKEAKGSEKAPLHEVKIVVEPHEDHVDLSIDSGGHTMNSTMDDSELGDPAVMKAFHGKPTLESLDSAVVDSGIGSTWSELDTDYDQSGMDSGLWEASPKVSTYATGQILEDKAILRIMERAPYLPPTNLEFLGSPLQRGFMPSQRLQGPEMGAMSPKPYRPRFMRQQSPLVPRSMRPSYPFTPPRRGPSVFAPNQSPGFVSQTPFRPMSPNVSTPTRPMTPKMVRMHFGPMSPSPSFSPFFSPMGNALQRFKVPGHVTQLHPQHRRILSQRQRPQSSSRRQWESRPDPYASLMSQKEKEWVIKLQMIQLQSENPHLDDYYYQAYYENLERKLSEEEFLGERKKREPTKLVTPYIQKAETYESVVHIEGSLGQVAVSTCYSPRRAIDAVSYAMPDEAIKALGYQRLRVLKHAEKVFLMFLEVEELARKMSHIPEEEHVHFQHKQNYKVQRIYDVLKIAPCHNEEESEFLQLLQVGKGKKLVARLLPFLRSEQAREILLLVVQHLTFLIKNDSAEESLSVLYGPLKTIINGLSFTELIGVTQELTRPLPESNDLPLTLAFQNQFGISLLYCLLSHGERLLSSDLPMEPCIGDFEKWTDTVFLVAKELSHVSKSSMVEPLFLPSNLLSLFCRYLDKQTIHKLEDKMECPVIPPYTAVPS.

Disordered stretches follow at residues 42 to 75 (LDQESDEEPVKLEDDHTKPIQMPEAPKEEEPEAL) and 337 to 366 (LHPQHRRILSQRQRPQSSSRRQWESRPDPY). Residues 49 to 59 (EPVKLEDDHTK) show a composition bias toward basic and acidic residues. The span at 346-356 (SQRQRPQSSSR) shows a compositional bias: low complexity.

This sequence belongs to the PAT1 family. In terms of assembly, interacts with ribonucleoprotein complex components. Interacts with cpeb. As to expression, oocyte-specific protein. Expressed throughout oogenesis but is not detectable in eggs, embryos, nor in adult tissues (at protein level).

The protein localises to the cytoplasm. The protein resides in the nucleus. In terms of biological role, RNA-binding protein that acts as a translational repressor. When overexpressed, able to disperse P-bodies. The polypeptide is Protein PAT1 homolog 2 (patl2) (Xenopus laevis (African clawed frog)).